The chain runs to 107 residues: BolA-like protein 3 (107 aa).

It belongs to the BolA/IbaG family. In terms of assembly, interacts with NFU1. In terms of tissue distribution, widely expressed.

Its subcellular location is the mitochondrion. Functionally, acts as a mitochondrial iron-sulfur (Fe-S) cluster assembly factor that facilitates (Fe-S) cluster insertion into a subset of mitochondrial proteins. Probably acts together with NFU1. The protein is BolA-like protein 3 of Homo sapiens (Human).